We begin with the raw amino-acid sequence, 259 residues long: GTP cyclohydrolase FolE2 (259 aa).

Belongs to the GTP cyclohydrolase IV family.

It catalyses the reaction GTP + H2O = 7,8-dihydroneopterin 3'-triphosphate + formate + H(+). The protein operates within cofactor biosynthesis; 7,8-dihydroneopterin triphosphate biosynthesis; 7,8-dihydroneopterin triphosphate from GTP: step 1/1. Converts GTP to 7,8-dihydroneopterin triphosphate. The polypeptide is GTP cyclohydrolase FolE2 (Thermotoga petrophila (strain ATCC BAA-488 / DSM 13995 / JCM 10881 / RKU-1)).